A 208-amino-acid chain; its full sequence is Large ribosomal subunit protein uL3 (208 aa).

Residues 123–147 (RHGQSRGPMAHGSRYHRRPGSMGPV) are disordered.

The protein belongs to the universal ribosomal protein uL3 family. As to quaternary structure, part of the 50S ribosomal subunit. Forms a cluster with proteins L14 and L19.

Functionally, one of the primary rRNA binding proteins, it binds directly near the 3'-end of the 23S rRNA, where it nucleates assembly of the 50S subunit. This is Large ribosomal subunit protein uL3 from Streptococcus sanguinis (strain SK36).